The following is a 585-amino-acid chain: Formate--tetrahydrofolate ligase (585 aa).

Residue 65 to 72 (TPHGEGKT) coordinates ATP.

The protein belongs to the formate--tetrahydrofolate ligase family.

It carries out the reaction (6S)-5,6,7,8-tetrahydrofolate + formate + ATP = (6R)-10-formyltetrahydrofolate + ADP + phosphate. The protein operates within one-carbon metabolism; tetrahydrofolate interconversion. This is Formate--tetrahydrofolate ligase from Shewanella baltica (strain OS195).